The sequence spans 357 residues: Acyl-coenzyme A diphosphatase NUDT19 (357 aa).

The Nudix hydrolase domain occupies Ala10–Glu242. Positions Ala97–Gly118 match the Nudix box motif. Mg(2+) is bound by residues Glu112 and Glu116. Lys300 carries the post-translational modification N6-succinyllysine. The short motif at Ala355 to Leu357 is the Microbody targeting signal element.

It belongs to the Nudix hydrolase family. Monomer. Mg(2+) serves as cofactor. It depends on Mn(2+) as a cofactor.

It is found in the peroxisome. It catalyses the reaction an acyl-CoA + H2O = an acyl-4'-phosphopantetheine + adenosine 3',5'-bisphosphate + 2 H(+). The catalysed reaction is CoA + H2O = (R)-4'-phosphopantetheine + adenosine 3',5'-bisphosphate + 2 H(+). It carries out the reaction hexanoyl-CoA + H2O = hexanoyl-4'-phosphopantetheine + adenosine 3',5'-bisphosphate + 2 H(+). The enzyme catalyses octanoyl-CoA + H2O = S-octanoyl-4'-phosphopantetheine + adenosine 3',5'-bisphosphate + 2 H(+). It catalyses the reaction butanoyl-CoA + H2O = S-butanoyl-4'-phosphopantetheine + adenosine 3',5'-bisphosphate + 2 H(+). The catalysed reaction is propanoyl-CoA + H2O = propanoyl-4'-phosphopantetheine + adenosine 3',5'-bisphosphate + 2 H(+). It carries out the reaction malonyl-CoA + H2O = malonyl-4'-phosphopantetheine + adenosine 3',5'-bisphosphate + 2 H(+). The enzyme catalyses succinyl-CoA + H2O = succinyl-4'-phosphopantetheine + adenosine 3',5'-bisphosphate + 2 H(+). It catalyses the reaction choloyl-CoA + H2O = S-choloyl-4'-phosphopantetheine + adenosine 3',5'-bisphosphate + 2 H(+). The catalysed reaction is 4,8-dimethylnonanoyl-CoA + H2O = S-(4,8-dimethylnonanoyl)-4'-phosphopantetheine + adenosine 3',5'-bisphosphate + 2 H(+). It carries out the reaction (9Z,12Z,15Z)-octadecatrienoyl-CoA + H2O = S-(9Z,12Z,15Z-octadecatrienoyl)-4'-phosphopantetheine + adenosine 3',5'-bisphosphate + 2 H(+). The enzyme catalyses (9Z,12Z)-octadecadienoyl-CoA + H2O = S-(9Z,12Z-octadecadienoyl)-4'-phosphopantetheine + adenosine 3',5'-bisphosphate + 2 H(+). It catalyses the reaction (9Z)-hexadecenoyl-CoA + H2O = S-(9Z-hexadecenoyl)-4'-phosphopantetheine + adenosine 3',5'-bisphosphate + 2 H(+). The catalysed reaction is (9Z)-tetradecenoyl-CoA + H2O = S-(9Z-tetradecenoyl)-4'-phosphopantetheine + adenosine 3',5'-bisphosphate + 2 H(+). It carries out the reaction (6Z)-octenoyl-CoA + H2O = S-(6Z-octenoyl)-4'-phosphopantetheine + adenosine 3',5'-bisphosphate + 2 H(+). The enzyme catalyses hexadecanoyl-CoA + H2O = S-hexadecanoyl-4'-phosphopantetheine + adenosine 3',5'-bisphosphate + 2 H(+). It catalyses the reaction tetradecanoyl-CoA + H2O = tetradecanoyl-4'-phosphopantetheine + adenosine 3',5'-bisphosphate + 2 H(+). The catalysed reaction is dodecanoyl-CoA + H2O = S-dodecanoyl-4'-phosphopantetheine + adenosine 3',5'-bisphosphate + 2 H(+). It carries out the reaction a 5'-end CoA-ribonucleoside in mRNA + H2O = a 5'-end phospho-adenosine-phospho-ribonucleoside in mRNA + (R)-4'-phosphopantetheine + 2 H(+). Its function is as follows. Fatty acyl-coenzyme A (CoA) diphosphatase that hydrolyzes fatty acyl-CoA to yield acyl-4'-phosphopantetheine and adenosine 3',5'-bisphosphate. Mediates the hydrolysis of a wide range of CoA esters, including choloyl-CoA and branched-chain fatty-acyl-CoA esters and at low substrate concentrations medium and long-chain fatty-acyl-CoA esters are the primary substrates. Highest activity seen with medium-chain acyl-CoA esters and higher rates of activity seen with the unsaturated acyl-CoA esters compared with the saturated esters. Exhibits decapping activity towards dpCoA-capped RNAs in vitro. The sequence is that of Acyl-coenzyme A diphosphatase NUDT19 (Nudt19) from Rattus norvegicus (Rat).